The chain runs to 90 residues: MALDTAQKAQIVAKFARKEKDTGSSEVQIALLSARIDSITEHMQNNPKDFSSRLGLLKLVGQRKRLMKYLKSTNYGAYSKLVNELNLKDK.

Belongs to the universal ribosomal protein uS15 family. In terms of assembly, part of the 30S ribosomal subunit. Forms a bridge to the 50S subunit in the 70S ribosome, contacting the 23S rRNA.

In terms of biological role, one of the primary rRNA binding proteins, it binds directly to 16S rRNA where it helps nucleate assembly of the platform of the 30S subunit by binding and bridging several RNA helices of the 16S rRNA. Forms an intersubunit bridge (bridge B4) with the 23S rRNA of the 50S subunit in the ribosome. The chain is Small ribosomal subunit protein uS15 from Campylobacter hominis (strain ATCC BAA-381 / DSM 21671 / CCUG 45161 / LMG 19568 / NCTC 13146 / CH001A).